The chain runs to 420 residues: Type II methyltransferase M.HgiCI (420 aa).

The SAM-dependent MTase C5-type domain occupies 2-417; the sequence is LKFIDLFAGI…LDLFKSADLA (416 aa). The active site involves C75.

This sequence belongs to the class I-like SAM-binding methyltransferase superfamily. C5-methyltransferase family.

The catalysed reaction is a 2'-deoxycytidine in DNA + S-adenosyl-L-methionine = a 5-methyl-2'-deoxycytidine in DNA + S-adenosyl-L-homocysteine + H(+). Functionally, a methylase that recognizes the double-stranded sequence 5'-GGYRCC-3', methylates C-5 on both strands, and protects the DNA from cleavage by the HgiCI endonuclease. The polypeptide is Type II methyltransferase M.HgiCI (hgiCIM) (Herpetosiphon aurantiacus (Herpetosiphon giganteus)).